Consider the following 357-residue polypeptide: Ribosomal RNA large subunit methyltransferase M (357 aa).

Residues Ser183, 216–219 (APGG), Asp235, Asp255, and Asp271 contribute to the S-adenosyl-L-methionine site. Lys300 serves as the catalytic Proton acceptor.

It belongs to the class I-like SAM-binding methyltransferase superfamily. RNA methyltransferase RlmE family. RlmM subfamily. Monomer.

Its subcellular location is the cytoplasm. It catalyses the reaction cytidine(2498) in 23S rRNA + S-adenosyl-L-methionine = 2'-O-methylcytidine(2498) in 23S rRNA + S-adenosyl-L-homocysteine + H(+). Its function is as follows. Catalyzes the 2'-O-methylation at nucleotide C2498 in 23S rRNA. The sequence is that of Ribosomal RNA large subunit methyltransferase M from Pseudomonas fluorescens (strain ATCC BAA-477 / NRRL B-23932 / Pf-5).